Here is a 55-residue protein sequence, read N- to C-terminus: Spermatid nuclear transition protein 1 (55 aa).

The segment covering Met-1–Lys-42 has biased composition (basic residues). The tract at residues Met-1 to Leu-55 is disordered. Phosphoserine is present on residues Ser-9 and Ser-40.

Belongs to the nuclear transition protein 1 family. As to expression, expressed by spermatids (at protein level).

The protein localises to the nucleus. It localises to the chromosome. Functionally, plays a key role in the replacement of histones to protamine in the elongating spermatids of mammals. In condensing spermatids, loaded onto the nucleosomes, where it promotes the recruitment and processing of protamines, which are responsible for histone eviction. This Homo sapiens (Human) protein is Spermatid nuclear transition protein 1 (TNP1).